The primary structure comprises 298 residues: Elongation factor Ts (298 aa).

The involved in Mg(2+) ion dislocation from EF-Tu stretch occupies residues 79–82 (TDFV).

Belongs to the EF-Ts family.

It is found in the cytoplasm. Functionally, associates with the EF-Tu.GDP complex and induces the exchange of GDP to GTP. It remains bound to the aminoacyl-tRNA.EF-Tu.GTP complex up to the GTP hydrolysis stage on the ribosome. The chain is Elongation factor Ts (tsf) from Mycoplasma genitalium (strain ATCC 33530 / DSM 19775 / NCTC 10195 / G37) (Mycoplasmoides genitalium).